The sequence spans 331 residues: NAD-dependent protein deacetylase HST2 (331 aa).

The Deacetylase sirtuin-type domain occupies 1–262 (MPSLDDILKP…EKLCTLLGLD (262 aa)). NAD(+) is bound by residues 26–46 (GAGI…TGLY) and 109–112 (QNID). H129 functions as the Proton acceptor in the catalytic mechanism. Zn(2+) contacts are provided by C137, C140, C161, and C164. NAD(+)-binding positions include 201 to 203 (GTS), 226 to 228 (NKE), and C248. Residues 276 to 331 (YSKAETKETKMHEIEDKLKEEAHLKEDKHTTKVDKKEKQNDANDKELEQLIDKLKI) adopt a coiled-coil conformation. Residues 283–319 (ETKMHEIEDKLKEEAHLKEDKHTTKVDKKEKQNDAND) form a disordered region.

It belongs to the sirtuin family. Class I subfamily. Zn(2+) is required as a cofactor.

It localises to the cytoplasm. The protein localises to the nucleus. The catalysed reaction is N(6)-acetyl-L-lysyl-[protein] + NAD(+) + H2O = 2''-O-acetyl-ADP-D-ribose + nicotinamide + L-lysyl-[protein]. Its function is as follows. NAD-dependent histone deacetylase that is involved in nuclear silencing events. Derepresses subtelomeric silencing and increases repression in nucleolar (rDNA) silencing. Its function is negatively regulated by active nuclear export. This Candida albicans (strain SC5314 / ATCC MYA-2876) (Yeast) protein is NAD-dependent protein deacetylase HST2 (HST2).